Consider the following 425-residue polypeptide: Glucose-1-phosphate adenylyltransferase (425 aa).

Residues Tyr110, Gly175, 190-191 (EK), and Ser208 contribute to the alpha-D-glucose 1-phosphate site.

The protein belongs to the bacterial/plant glucose-1-phosphate adenylyltransferase family. As to quaternary structure, homotetramer.

The catalysed reaction is alpha-D-glucose 1-phosphate + ATP + H(+) = ADP-alpha-D-glucose + diphosphate. Its pathway is glycan biosynthesis; glycogen biosynthesis. Functionally, involved in the biosynthesis of ADP-glucose, a building block required for the elongation reactions to produce glycogen. Catalyzes the reaction between ATP and alpha-D-glucose 1-phosphate (G1P) to produce pyrophosphate and ADP-Glc. This Nitrosospira multiformis (strain ATCC 25196 / NCIMB 11849 / C 71) protein is Glucose-1-phosphate adenylyltransferase.